The primary structure comprises 1062 residues: Exportin-T (1062 aa).

This sequence belongs to the exportin family.

The protein localises to the nucleus. It localises to the cytoplasm. Functionally, tRNA nucleus export receptor which facilitates tRNA translocation across the nuclear pore complex. Involved in pre-tRNA splicing, probably by affecting the interaction of pre-tRNA with splicing endonuclease. The chain is Exportin-T (LOS1) from Vanderwaltozyma polyspora (strain ATCC 22028 / DSM 70294 / BCRC 21397 / CBS 2163 / NBRC 10782 / NRRL Y-8283 / UCD 57-17) (Kluyveromyces polysporus).